The chain runs to 281 residues: Phosphatidylglycerol--prolipoprotein diacylglyceryl transferase (281 aa).

The next 4 helical transmembrane spans lie at 23 to 43, 71 to 91, 107 to 127, and 133 to 153; these read IGPL…LFAW, FVIW…VLFY, WDGG…MILF, and ILVW…LGVV. Arginine 154 provides a ligand contact to a 1,2-diacyl-sn-glycero-3-phospho-(1'-sn-glycerol). The next 3 membrane-spanning stretches (helical) occupy residues 189-209, 217-237, and 247-267; these read LYEA…LVWG, GFVA…VEFF, and LFGG…LLGL.

It belongs to the Lgt family.

The protein localises to the cell inner membrane. The enzyme catalyses L-cysteinyl-[prolipoprotein] + a 1,2-diacyl-sn-glycero-3-phospho-(1'-sn-glycerol) = an S-1,2-diacyl-sn-glyceryl-L-cysteinyl-[prolipoprotein] + sn-glycerol 1-phosphate + H(+). The protein operates within protein modification; lipoprotein biosynthesis (diacylglyceryl transfer). Its function is as follows. Catalyzes the transfer of the diacylglyceryl group from phosphatidylglycerol to the sulfhydryl group of the N-terminal cysteine of a prolipoprotein, the first step in the formation of mature lipoproteins. This Brucella canis (strain ATCC 23365 / NCTC 10854 / RM-666) protein is Phosphatidylglycerol--prolipoprotein diacylglyceryl transferase.